The chain runs to 368 residues: Glutamate 5-kinase (368 aa).

Lys-9 is a binding site for ATP. The substrate site is built by Ser-49, Asp-136, and Asn-148. ATP-binding positions include Thr-168–Asp-169 and Thr-210–Lys-216. A PUA domain is found at Ala-275–Glu-353.

This sequence belongs to the glutamate 5-kinase family.

The protein resides in the cytoplasm. The catalysed reaction is L-glutamate + ATP = L-glutamyl 5-phosphate + ADP. It functions in the pathway amino-acid biosynthesis; L-proline biosynthesis; L-glutamate 5-semialdehyde from L-glutamate: step 1/2. Its function is as follows. Catalyzes the transfer of a phosphate group to glutamate to form L-glutamate 5-phosphate. In Haemophilus influenzae (strain 86-028NP), this protein is Glutamate 5-kinase.